A 160-amino-acid polypeptide reads, in one-letter code: Ribosomal RNA large subunit methyltransferase H (160 aa).

Leu76 and Gly108 together coordinate S-adenosyl-L-methionine.

This sequence belongs to the RNA methyltransferase RlmH family. Homodimer.

The protein resides in the cytoplasm. It catalyses the reaction pseudouridine(1915) in 23S rRNA + S-adenosyl-L-methionine = N(3)-methylpseudouridine(1915) in 23S rRNA + S-adenosyl-L-homocysteine + H(+). Its function is as follows. Specifically methylates the pseudouridine at position 1915 (m3Psi1915) in 23S rRNA. This chain is Ribosomal RNA large subunit methyltransferase H, found in Afipia carboxidovorans (strain ATCC 49405 / DSM 1227 / KCTC 32145 / OM5) (Oligotropha carboxidovorans).